The sequence spans 560 residues: Oxygen-dependent choline dehydrogenase 1 (560 aa).

8-37 (DYIIIGAGSAGNVLATRLTEDPDVQVLLLE) serves as a coordination point for FAD. The active-site Proton acceptor is the His475.

It belongs to the GMC oxidoreductase family. Requires FAD as cofactor.

It carries out the reaction choline + A = betaine aldehyde + AH2. It catalyses the reaction betaine aldehyde + NAD(+) + H2O = glycine betaine + NADH + 2 H(+). The protein operates within amine and polyamine biosynthesis; betaine biosynthesis via choline pathway; betaine aldehyde from choline (cytochrome c reductase route): step 1/1. Involved in the biosynthesis of the osmoprotectant glycine betaine. Catalyzes the oxidation of choline to betaine aldehyde and betaine aldehyde to glycine betaine at the same rate. The protein is Oxygen-dependent choline dehydrogenase 1 of Chromohalobacter salexigens (strain ATCC BAA-138 / DSM 3043 / CIP 106854 / NCIMB 13768 / 1H11).